Here is a 122-residue protein sequence, read N- to C-terminus: Protein C10 (122 aa).

Belongs to the UPF0456 family.

Its subcellular location is the cytoplasm. This Danio rerio (Zebrafish) protein is Protein C10.